We begin with the raw amino-acid sequence, 1506 residues long: Gag-Pol polyprotein (1506 aa).

2 CCHC-type zinc fingers span residues Gln385 to Gln402 and Ile404 to Gln421. The Peptidase A2 domain maps to Lys459 to Asn530. Asp464 serves as the catalytic Protease; shared with dimeric partner. Residues Glu587–Leu776 enclose the Reverse transcriptase domain. Residues Asp652, Asp727, Asp728, Asp980, Glu1012, Asp1032, and Asp1085 each coordinate Mg(2+). Residues Val971–Leu1093 form the RNase H type-1 domain. Residues Glu1228 to Gln1269 form an Integrase-type zinc finger. Zn(2+)-binding residues include His1237, His1241, Cys1265, and Cys1268. Residues Glu1270–Lys1430 enclose the Integrase catalytic domain. Mg(2+) is bound by residues Asp1291, Asp1343, and Glu1379. The integrase-type DNA-binding region spans Arg1447–Pro1499.

This sequence belongs to the retroviral Pol polyprotein family. Homotetramer; further associates as a homohexadecamer. The cofactor is Mg(2+). Specific enzymatic cleavages by the viral protease yield mature proteins.

The protein resides in the virion. The enzyme catalyses 3'-end directed exonucleolytic cleavage of viral RNA-DNA hybrid.. The catalysed reaction is Endonucleolytic cleavage to 5'-phosphomonoester.. It carries out the reaction dUTP + H2O = dUMP + diphosphate + H(+). It catalyses the reaction DNA(n) + a 2'-deoxyribonucleoside 5'-triphosphate = DNA(n+1) + diphosphate. In terms of biological role, mediates, with Gag polyprotein, the essential events in virion assembly, including binding the plasma membrane, making the protein-protein interactions necessary to create spherical particles, recruiting the viral Env proteins, and packaging the genomic RNA via direct interactions with the RNA packaging sequence. Targets the polyprotein to the plasma membrane. Its function is as follows. Forms the core that encapsulates the genomic RNA-nucleocapsid complex in the virion. Functionally, encapsulates and protects viral dimeric unspliced genomic RNA (gRNA). Binds these RNAs through its zinc fingers. Acts as a nucleic acid chaperone which is involved in rearrangement of nucleic acid secondary structure during gRNA retrotranscription. Also facilitates template switch leading to recombination. In terms of biological role, the aspartyl protease mediates proteolytic cleavages of Gag and Gag-Pol polyproteins during or shortly after the release of the virion from the plasma membrane. Cleavages take place as an ordered, step-wise cascade to yield mature proteins. This process is called maturation. Displays maximal activity during the budding process just prior to particle release from the cell. RT is a multifunctional enzyme that converts the viral dimeric RNA genome into dsDNA in the cytoplasm, shortly after virus entry into the cell. This enzyme displays a DNA polymerase activity that can copy either DNA or RNA templates, and a ribonuclease H (RNase H) activity that cleaves the RNA strand of RNA-DNA heteroduplexes in a partially processive 3' to 5' endonucleasic mode. Conversion of viral genomic RNA into dsDNA requires many steps. A tRNA binds to the primer-binding site (PBS) situated at the 5' end of the viral RNA. RT uses the 3' end of the tRNA primer to perfom a short round of RNA-dependent minus-strand DNA synthesis. The reading proceeds through the U5 region and ends after the repeated (R) region which is present at both ends of viral RNA. The portion of the RNA-DNA heteroduplex is digested by the RNase H, resulting in a ssDNA product attached to the tRNA primer. This ssDNA/tRNA hybridizes with the identical R region situated at the 3' end of viral RNA. This template exchange, known as minus-strand DNA strong stop transfer, can be either intra- or intermolecular. RT uses the 3' end of this newly synthesized short ssDNA to perfom the RNA-dependent minus-strand DNA synthesis of the whole template. RNase H digests the RNA template except for a polypurine tract (PPT) situated at the 5' end of the genome. It is not clear if both polymerase and RNase H activities are simultaneous. RNase H probably can proceed both in a polymerase-dependent (RNA cut into small fragments by the same RT performing DNA synthesis) and a polymerase-independent mode (cleavage of remaining RNA fragments by free RTs). Secondly, RT performs DNA-directed plus-strand DNA synthesis using the PPT that has not been removed by RNase H as primers. PPT and tRNA primers are then removed by RNase H. The 3' and 5' ssDNA PBS regions hybridize to form a circular dsDNA intermediate. Strand displacement synthesis by RT to the PBS and PPT ends produces a blunt ended, linear dsDNA copy of the viral genome that includes long terminal repeats (LTRs) at both ends. Its function is as follows. Catalyzes viral DNA integration into the host chromosome, by performing a series of DNA cutting and joining reactions. The polypeptide is Gag-Pol polyprotein (pol) (Maedi visna virus (strain KV1772) (MVV)).